Reading from the N-terminus, the 736-residue chain is ABC transporter G family member 16 (736 aa).

Residues 88-332 (LDFHDLVPWR…FAGFGNPIPE (245 aa)) form the ABC transporter domain. Residue 125-132 (GASGSGKS) participates in ATP binding. The next 7 helical transmembrane spans lie at 410 to 430 (SVIN…PFWI), 449 to 469 (LLGM…TVFW), 484 to 504 (FFAF…PVFL), 525 to 545 (VLSH…AFAV), 569 to 589 (ASFW…PHVM), 590 to 610 (LGYT…GFFI), and 709 to 729 (LLIT…CLLL). An ABC transmembrane type-2 domain is found at 430-640 (IEIKTLTRRS…PYEAVLQNEF (211 aa)).

It belongs to the ABC transporter superfamily. ABCG family. Eye pigment precursor importer (TC 3.A.1.204) subfamily.

The protein resides in the membrane. The chain is ABC transporter G family member 16 (ABCG16) from Arabidopsis thaliana (Mouse-ear cress).